Consider the following 733-residue polypeptide: Catalase-peroxidase (733 aa).

Residues Met1–Ala23 form the signal peptide. Residues Trp96–Tyr224 constitute a cross-link (tryptophyl-tyrosyl-methioninium (Trp-Tyr) (with M-250)). His97 (proton acceptor) is an active-site residue. A cross-link (tryptophyl-tyrosyl-methioninium (Tyr-Met) (with W-96)) is located at residues Tyr224–Met250. Residue His265 participates in heme b binding.

Belongs to the peroxidase family. Peroxidase/catalase subfamily. Homodimer or homotetramer. Requires heme b as cofactor. In terms of processing, formation of the three residue Trp-Tyr-Met cross-link is important for the catalase, but not the peroxidase activity of the enzyme.

It carries out the reaction H2O2 + AH2 = A + 2 H2O. It catalyses the reaction 2 H2O2 = O2 + 2 H2O. In terms of biological role, bifunctional enzyme with both catalase and broad-spectrum peroxidase activity. This Azoarcus sp. (strain BH72) protein is Catalase-peroxidase.